Here is a 325-residue protein sequence, read N- to C-terminus: MVPREAPESAQCLCPSLTIPNAKDVLRKRHKRRSRQHQRFMARKALLQEQGLLSMPPEPGSSPLPTPFGAATATEAASSGKQCLRAGSGSAPCSRRPAPGKASGPLPSKCVAIDCEMVGTGPRGRVSELARCSIVSYHGNVLYDKYIRPEMPIADYRTRWSGITRQHMRKAVPFQVAQKEILKLLKGKVVVGHALHNDFQALKYVHPRSQTRDTTYVPNFLSEPGLHTRARVSLKDLALQLLHKKIQVGQHGHSSVEDATTAMELYRLVEVQWEQQEARSLWTCPEDREPDSSTDMEQYMEDQYWPDDLAHGSRGGAREAQDRRN.

Residues 27 to 35 (RKRHKRRSR) carry the Nucleolar localization signal motif. The tract at residues 85–105 (RAGSGSAPCSRRPAPGKASGP) is disordered. Residues 110–266 (CVAIDCEMVG…EDATTAMELY (157 aa)) enclose the Exonuclease domain. Positions 165-188 (RQHMRKAVPFQVAQKEILKLLKGK) match the Nuclear localization signal motif. The tract at residues 281–325 (LWTCPEDREPDSSTDMEQYMEDQYWPDDLAHGSRGGAREAQDRRN) is disordered. The span at 308-325 (DLAHGSRGGAREAQDRRN) shows a compositional bias: basic and acidic residues.

The protein localises to the nucleus. It is found in the nucleolus. Exonuclease with activity against single- and double-stranded DNA and RNA. Mediates p53-induced apoptosis. When induced by p53 following DNA damage, digests double-stranded DNA to form single-stranded DNA and amplifies DNA damage signals, leading to enhancement of apoptosis. This Homo sapiens (Human) protein is Apoptosis-enhancing nuclease (AEN).